Here is a 645-residue protein sequence, read N- to C-terminus: Fructose-1,6-bisphosphatase class 3 (645 aa).

The protein belongs to the FBPase class 3 family. Requires Mn(2+) as cofactor.

It carries out the reaction beta-D-fructose 1,6-bisphosphate + H2O = beta-D-fructose 6-phosphate + phosphate. Its pathway is carbohydrate biosynthesis; gluconeogenesis. This chain is Fructose-1,6-bisphosphatase class 3, found in Fusobacterium nucleatum subsp. nucleatum (strain ATCC 25586 / DSM 15643 / BCRC 10681 / CIP 101130 / JCM 8532 / KCTC 2640 / LMG 13131 / VPI 4355).